A 537-amino-acid polypeptide reads, in one-letter code: Cytochrome P450 CYP12A2 (537 aa).

Residue Cys483 coordinates heme.

The protein belongs to the cytochrome P450 family. The cofactor is heme.

The polypeptide is Cytochrome P450 CYP12A2 (CYP12A2) (Musca domestica (House fly)).